Reading from the N-terminus, the 289-residue chain is Pantothenate synthetase (289 aa).

Residue 30–37 participates in ATP binding; the sequence is MGNLHEGH. His-37 acts as the Proton donor in catalysis. Gln-61 serves as a coordination point for (R)-pantoate. Gln-61 lines the beta-alanine pocket. Position 149–152 (149–152) interacts with ATP; it reads GEKD. Gln-155 contributes to the (R)-pantoate binding site. 186–189 lines the ATP pocket; the sequence is MSSR.

Belongs to the pantothenate synthetase family. In terms of assembly, homodimer.

The protein localises to the cytoplasm. The catalysed reaction is (R)-pantoate + beta-alanine + ATP = (R)-pantothenate + AMP + diphosphate + H(+). It participates in cofactor biosynthesis; (R)-pantothenate biosynthesis; (R)-pantothenate from (R)-pantoate and beta-alanine: step 1/1. Catalyzes the condensation of pantoate with beta-alanine in an ATP-dependent reaction via a pantoyl-adenylate intermediate. In Psychromonas ingrahamii (strain DSM 17664 / CCUG 51855 / 37), this protein is Pantothenate synthetase.